A 457-amino-acid chain; its full sequence is Cell division protein FtsA (457 aa).

This sequence belongs to the FtsA/MreB family. As to quaternary structure, self-interacts. Interacts with FtsZ.

It localises to the cell membrane. Its function is as follows. Cell division protein that is involved in the assembly of the Z ring. May serve as a membrane anchor for the Z ring. Increased expression restores growth to a PBP2b (penA) deletion strain as well as mreCD and rodA deletions, but not gpsB or rodZ deletions. Does not restore wild-type cell morphology to the penA deletion. In Streptococcus pneumoniae serotype 2 (strain D39 / NCTC 7466), this protein is Cell division protein FtsA.